The following is a 217-amino-acid chain: Insulin-like growth factor 2.L (217 aa).

An N-terminal signal peptide occupies residues 1-56; the sequence is MEQLSCKHRSSSMEAEAQLCRQTESRSTQLPRMSVMRHLFLLSITFLVYTLDSAKA. Residues 57-83 form a b region; sequence YRPTETLCGGELVDTLQFVCGDRGFYF. Intrachain disulfides connect Cys64–Cys103, Cys76–Cys116, and Cys102–Cys107. Residues 84–96 form a c region; the sequence is STNNGRSNRRSNR. The segment at 97–117 is a; the sequence is GIVEECCFRSCDLELLETYCA. A d region spans residues 118–123; that stretch reads KPSKNE. Residues 124–217 constitute a propeptide, e peptide; that stretch reads RDVSTAPATA…LQQTSEPSHN (94 aa).

This sequence belongs to the insulin family.

The protein localises to the secreted. Functionally, the insulin-like growth factors, isolated from plasma, are structurally and functionally related to insulin but have a much higher growth-promoting activity. Promotes anterior neural development. Acts as a ligand for integrin which is required for IGF2 signaling. In Xenopus laevis (African clawed frog), this protein is Insulin-like growth factor 2.L.